We begin with the raw amino-acid sequence, 518 residues long: MNCQSGLRWLVTLCAFFQVGSARDTHESTRQCDKPVSQKDMNSFLWTVKRPRPFPPSYLFGTIHVPYTRVWDYIPESSKRAFQTSNSVFFELDLTDPLTISKLTSCQLLPNGENLQTLLPRDLYRRLKRHLDYVKHMMPFWMTADQRGRGLYADYLFNAIAGNWERKRPVWVMLMVNSLTEADVRSRGTPVLDLFLAQEAERLGKQTGAVERVEEQCHPLNGLNFSQVLFALNQTLLQHESLRAGILQGTFTTEDLIAHYNCGDLNSIIFNHDTSQLPHFINSSLPDHERLTAQQIDSYLRQELIYKRNERMARRVSALLQRNPNQSFFFAFGAGHFLGNHSVLDILRQEGYEVEHTPPQEPIIQSWSEREATTLNPTEDSFESVTEWTSETPELEEISQEELSHMLLPDSLSQLEEFGRYKHPRKTHHTHSRPRLFSDLWVRIGDSTTPHPSIRITNGYVTVEPPQIRQEQQQRLRERLKPLSEPTNPSALDSAAPNPTYALTCFLACLISQLLFAS.

The signal sequence occupies residues M1 to A22. The Extracellular segment spans residues R23–P499. 5 N-linked (GlcNAc...) asparagine glycosylation sites follow: N224, N233, N282, N325, and N340. Residues T500–A517 traverse the membrane as a helical segment. S518 is a topological domain (cytoplasmic).

This sequence belongs to the TIKI family. Requires Mn(2+) as cofactor. Co(2+) serves as cofactor.

The protein localises to the cell membrane. Functionally, metalloprotease that acts as a negative regulator of the Wnt signaling pathway by mediating the cleavage of the N-terminal residues of a subset of Wnt proteins. Following cleavage, Wnt proteins become oxidized and form large disulfide-bond oligomers, leading to their inactivation. In Danio rerio (Zebrafish), this protein is Metalloprotease TIKI2 (trabd2b).